Consider the following 636-residue polypeptide: Transcription termination factor FttA (636 aa).

Residues 4–72 form a KHa region; the sequence is ELELKRIRDE…VVFRWNVDKR (69 aa). Residues 73–140 are KHb; that stretch reads KDPAETKDYI…WQPKTIRTPP (68 aa). Residues 181-383 form a metallo-beta-lactamase N-terminus region; that stretch reads NIRMNALGGF…LLIEATYGGP (203 aa). Zn(2+)-binding residues include histidine 242, histidine 244, aspartate 246, histidine 247, histidine 329, and aspartate 352. The segment at 384–577 is beta-Casp; the sequence is QDRIPSRQES…LKVFTLEGFS (194 aa). Positions 578 to 636 are metallo-beta-lactamase C-terminus; the sequence is GHSSRSQISQFLRRIQPRPKVVIVNHGEESKCVSLSTMIHKKLRKSTKSPKNLEVVLLK. Histidine 603 contacts Zn(2+).

This sequence belongs to the metallo-beta-lactamase superfamily. RNA-metabolizing metallo-beta-lactamase-like family. FttA subfamily. As to quaternary structure, homodimer. Interacts with RNA polymerase (RNAP), interacts with the Spt4-Spt5 complex. Zn(2+) serves as cofactor.

In terms of biological role, terminates transcription on the whole genome. Termination is linked to FttA-mediated RNA cleavage and does not require NTP hydrolysis. Cleaves endonucleolytically at the RNA exit channel of RNA polymerase (RNAP); the 5'-3' exonuclease activity of this protein degrades the nascent RNA released from RNAP. Its function is as follows. Terminates transcription genome-wide in M.maripaludis. Restores wild-type growth to a strain of Methanococcus maripaludis depleted for this gene at 22 degrees Celsius and prevents transcriptional read-through. Transcription termination is most effective in vivo on RNAs with more than one U4-tract in their 3'-ends. Has endonuclease activity after U-rich tracts in transcription termination sequences. This is Transcription termination factor FttA from Lokiarchaeum sp. (strain GC14_75).